The sequence spans 340 residues: Nuclear transcription factor Y subunit A-3 (340 aa).

The interval 43–116 (SLSLKVDSRP…KGFASNPKQG (74 aa)) is disordered. Residues 60–77 (QISFQDQDSSSTQSTGQS) show a composition bias toward low complexity. The span at 78 to 103 (YTEVASSGDDNPSRQISFSAKSGSEI) shows a compositional bias: polar residues. Residues 182–205 (FVNAKQYHAIMRRRQQRAKLEAQN) carry the Subunit association domain (SAD) motif. Residues 212 to 237 (KPYLHESRHVHALKRPRGSGGRFLNT) constitute a DNA-binding region (NFYA/HAP2-type).

It belongs to the NFYA/HAP2 subunit family. In terms of assembly, heterotrimeric transcription factor composed of three components, NF-YA, NF-YB and NF-YC. NF-YB and NF-YC must interact and dimerize for NF-YA association and DNA binding. Ubiquitous.

It localises to the nucleus. Stimulates the transcription of various genes by recognizing and binding to a CCAAT motif in promoters. This Arabidopsis thaliana (Mouse-ear cress) protein is Nuclear transcription factor Y subunit A-3 (NFYA3).